Reading from the N-terminus, the 242-residue chain is Copper transport protein B (242 aa).

Transmembrane regions (helical) follow at residues 8–28 (ICLC…ACVL) and 86–106 (ITGP…TAGY). A disordered region spans residues 153-175 (ESATTNVPSSQTPNESSPLVAGR). Positions 154-169 (SATTNVPSSQTPNESS) are enriched in polar residues. Helical transmembrane passes span 187–207 (IILA…MLLF) and 210–230 (YNGF…LVFG).

This sequence belongs to the copper transporter (Ctr) (TC 1.A.56) family. SLC31A subfamily.

The protein resides in the membrane. Transporter that is probably involved in the transport of copper, even if it does not act as a major copper transporter. The chain is Copper transport protein B from Aspergillus fumigatus (strain ATCC MYA-4609 / CBS 101355 / FGSC A1100 / Af293) (Neosartorya fumigata).